A 199-amino-acid chain; its full sequence is MENFRKVRSEEAPAGDGDEGGSPSSGPFADLAPGAVHMRVKEGSKIRNLLAFATASMAQPATRAIVFSGCGRATTKTVTCAEILKRRLAGLHQVTRLRYRSVREVWQSLPPGPTPGQTPSDPAASLSVLKNVPSLAILLSKDALDPRQLGYQPPNLSPGPSSPPTVSTSKRSLGESAAGEGTAKRSQPEPEAENEDRTA.

Positions 1–11 (MENFRKVRSEE) are enriched in basic and acidic residues. 2 disordered regions span residues 1–31 (MENF…FADL) and 146–199 (PRQL…DRTA). The residue at position 172 (Ser-172) is a Phosphoserine. Positions 190-199 (PEAENEDRTA) are enriched in acidic residues.

This sequence belongs to the histone-like Alba family. In terms of assembly, component of nuclear RNase P and RNase MRP ribonucleoproteins. RNase P consists of a catalytic RNA moiety and 10 different protein chains; POP1, POP4, POP5, POP7, RPP14, RPP21, RPP25, RPP30, RPP38 and RPP40. Within the RNase P complex, POP1, POP7 and RPP25 form the 'finger' subcomplex, POP5, RPP14, RPP40 and homodimeric RPP30 form the 'palm' subcomplex, and RPP21, POP4 and RPP38 form the 'wrist' subcomplex. All subunits of the RNase P complex interact with the catalytic RNA. Several subunits of RNase P are also part of the RNase MRP complex. RNase MRP consists of a catalytic RNA moiety and about 8 protein subunits; POP1, POP7, RPP25, RPP30, RPP38, RPP40 and possibly also POP4 and POP5. POP7 forms a heterodimer with RPP25 that binds to the P3 stem loop of the catalytic RNA.

The protein localises to the nucleus. Its subcellular location is the nucleolus. Component of ribonuclease P, a ribonucleoprotein complex that generates mature tRNA molecules by cleaving their 5'-ends. Also a component of the MRP ribonuclease complex, which cleaves pre-rRNA sequences. This Rattus norvegicus (Rat) protein is Ribonuclease P protein subunit p25 (Rpp25).